The sequence spans 456 residues: Serine--tRNA ligase (456 aa).

Disordered regions lie at residues 107–130 (PHSSVPEGRSESDNREVRRWGTPP) and 229–253 (FLENQPVAATLPSNSNSPQGGQDDD). Residues 114–125 (GRSESDNREVRR) show a composition bias toward basic and acidic residues. Over residues 239 to 248 (LPSNSNSPQG) the composition is skewed to polar residues. 260-262 (TSE) is a binding site for L-serine. 291–293 (RSE) lines the ATP pocket. Position 314 (Glu314) interacts with L-serine. 378-381 (EISS) contributes to the ATP binding site. Position 413 (Ser413) interacts with L-serine.

This sequence belongs to the class-II aminoacyl-tRNA synthetase family. Type-1 seryl-tRNA synthetase subfamily. In terms of assembly, homodimer. The tRNA molecule binds across the dimer.

It localises to the cytoplasm. It catalyses the reaction tRNA(Ser) + L-serine + ATP = L-seryl-tRNA(Ser) + AMP + diphosphate + H(+). The enzyme catalyses tRNA(Sec) + L-serine + ATP = L-seryl-tRNA(Sec) + AMP + diphosphate + H(+). It participates in aminoacyl-tRNA biosynthesis; selenocysteinyl-tRNA(Sec) biosynthesis; L-seryl-tRNA(Sec) from L-serine and tRNA(Sec): step 1/1. Catalyzes the attachment of serine to tRNA(Ser). Is also able to aminoacylate tRNA(Sec) with serine, to form the misacylated tRNA L-seryl-tRNA(Sec), which will be further converted into selenocysteinyl-tRNA(Sec). This chain is Serine--tRNA ligase, found in Nitrosospira multiformis (strain ATCC 25196 / NCIMB 11849 / C 71).